Consider the following 112-residue polypeptide: Ribosomal processing cysteine protease Prp (112 aa).

Histidine 22 functions as the Proton donor in the catalytic mechanism. The Nucleophile role is filled by cysteine 34.

The protein belongs to the Prp family. As to quaternary structure, homodimer.

An essential cysteine protease that cleaves the N-terminus from ribosomal protein bL27. The sequence is that of Ribosomal processing cysteine protease Prp from Bacillus subtilis (strain 168).